The primary structure comprises 169 residues: Mu-like prophage FluMu host-nuclease inhibitor protein gam (169 aa).

To phage Mu protein gam.

In terms of biological role, protects linear double-stranded DNA of Mu genome from exonuclease degradation. The protein is Mu-like prophage FluMu host-nuclease inhibitor protein gam of Haemophilus influenzae (strain ATCC 51907 / DSM 11121 / KW20 / Rd).